A 1609-amino-acid polypeptide reads, in one-letter code: Probable cation-transporting ATPase I (1609 aa).

10 helical membrane passes run 30 to 50 (GAVNTMQMLASPVAEFAWPVV), 176 to 196 (LAILMPLTAAVMDLVALSAAV), 238 to 258 (IALSITTAAASGLTQAVGTPL), 357 to 377 (LIAAASALLAGGGTEDAAGAI), 641 to 661 (VHLAQGGTTLAGLLLITASAG), 673 to 693 (WFSPVNAAAATALVTGVVSAS), 778 to 798 (ILAVGAAASAIVGSNIDALLV), 921 to 941 (LFEGSAIVAGHARAIVVATGV), 969 to 989 (TSKVLPLTLAGGAAVTGLALL), and 997 to 1017 (AVADGVAIAVAAVPEGLPLVA). Catalysis depends on aspartate 1053, which acts as the 4-aspartylphosphate intermediate. Aspartate 1335 and aspartate 1339 together coordinate Mg(2+). Transmembrane regions (helical) follow at residues 1396-1416 (ILVGGNVGEVVFTIIGTVFGA) and 1426-1446 (LLLVNLLTDMFPALSIAVTSQ). Residues 1447–1476 (YEEPGEDEYQTDEEADEARRTHQHEVLTGP) form a disordered region. Over residues 1449–1462 (EPGEDEYQTDEEAD) the composition is skewed to acidic residues. 2 consecutive transmembrane segments (helical) span residues 1542–1562 (VVATALGSAGVLIGIIQTPVI) and 1573–1593 (PIAWSGVITATAGATAVSVLA).

The protein belongs to the cation transport ATPase (P-type) (TC 3.A.3) family.

It is found in the cell membrane. It carries out the reaction ATP + H2O = ADP + phosphate + H(+). The chain is Probable cation-transporting ATPase I (ctpI) from Mycobacterium leprae (strain TN).